Here is a 40-residue protein sequence, read N- to C-terminus: Hemoglobin subunit alpha-2 (40 aa).

The Globin domain maps to 1-40; it reads VGPHLDDYGGEALHRNFEVYPQTKTYFPHFDASAGSNQLK.

It belongs to the globin family. As to quaternary structure, heterotetramer of two alpha chains and two beta chains. As to expression, red blood cells.

Involved in oxygen transport from the lung to the various peripheral tissues. This Saara hardwickii (Indian spiny-tailed lizard) protein is Hemoglobin subunit alpha-2.